We begin with the raw amino-acid sequence, 412 residues long: Peptide chain release factor subunit 1 (412 aa).

It belongs to the eukaryotic release factor 1 family. In terms of assembly, heterodimer of two subunits, one of which binds GTP.

It is found in the cytoplasm. Functionally, directs the termination of nascent peptide synthesis (translation) in response to the termination codons UAA, UAG and UGA. This chain is Peptide chain release factor subunit 1, found in Methanobrevibacter smithii (strain ATCC 35061 / DSM 861 / OCM 144 / PS).